The following is a 186-amino-acid chain: Protein YABBY 2 (186 aa).

The segment at 17–44 (CNFCNTIFAVSVPSNSMLNIVTVRCGHC) adopts a C4-type zinc-finger fold.

The protein belongs to the YABBY family. In terms of tissue distribution, expressed in leaf blades, leaf sheaths and flowers.

The protein resides in the nucleus. The protein is Protein YABBY 2 (YAB2) of Oryza sativa subsp. japonica (Rice).